The primary structure comprises 501 residues: Galactokinase (501 aa).

4 residues coordinate alpha-D-galactose: Arg54, Glu60, His61, and Asp63. Gly158, Gly160, Ser162, and Ser163 together coordinate ATP. Residue Asp207 coordinates alpha-D-galactose. Asp207 acts as the Proton acceptor in catalysis. Ser250 and Lys252 together coordinate ATP. Residue Tyr260 coordinates alpha-D-galactose.

Belongs to the GHMP kinase family. GalK subfamily.

It catalyses the reaction alpha-D-galactose + ATP = alpha-D-galactose 1-phosphate + ADP + H(+). It functions in the pathway carbohydrate metabolism; galactose metabolism. The sequence is that of Galactokinase (galK) from Dictyostelium discoideum (Social amoeba).